The chain runs to 347 residues: GMP reductase (347 aa).

108–131 contributes to the NADP(+) binding site; it reads ADFQKTKDVMALSDELIFICIDIA. Positions 181 and 183 each coordinate K(+). The active-site Thioimidate intermediate is C186. 216 to 239 lines the NADP(+) pocket; the sequence is IIGDGGCTCPGDVAKAFGGGADFV.

This sequence belongs to the IMPDH/GMPR family. GuaC type 1 subfamily. As to quaternary structure, homotetramer.

It catalyses the reaction IMP + NH4(+) + NADP(+) = GMP + NADPH + 2 H(+). In terms of biological role, catalyzes the irreversible NADPH-dependent deamination of GMP to IMP. It functions in the conversion of nucleobase, nucleoside and nucleotide derivatives of G to A nucleotides, and in maintaining the intracellular balance of A and G nucleotides. This Vibrio cholerae serotype O1 (strain ATCC 39541 / Classical Ogawa 395 / O395) protein is GMP reductase.